The chain runs to 287 residues: Ribosomal RNA small subunit methyltransferase A (287 aa).

6 residues coordinate S-adenosyl-L-methionine: Asn28, Leu30, Gly55, Glu77, Asp103, and Asn123.

It belongs to the class I-like SAM-binding methyltransferase superfamily. rRNA adenine N(6)-methyltransferase family. RsmA subfamily.

Its subcellular location is the cytoplasm. It carries out the reaction adenosine(1518)/adenosine(1519) in 16S rRNA + 4 S-adenosyl-L-methionine = N(6)-dimethyladenosine(1518)/N(6)-dimethyladenosine(1519) in 16S rRNA + 4 S-adenosyl-L-homocysteine + 4 H(+). Functionally, specifically dimethylates two adjacent adenosines (A1518 and A1519) in the loop of a conserved hairpin near the 3'-end of 16S rRNA in the 30S particle. May play a critical role in biogenesis of 30S subunits. The chain is Ribosomal RNA small subunit methyltransferase A from Rhodopseudomonas palustris (strain TIE-1).